The primary structure comprises 308 residues: Isoaspartyl peptidase/L-asparaginase (308 aa).

Methionine 1 is modified (N-acetylmethionine). Threonine 168 serves as the catalytic Nucleophile. Residues arginine 196 to aspartate 199 and threonine 219 to glycine 222 contribute to the substrate site.

Belongs to the Ntn-hydrolase family. As to quaternary structure, heterodimer of an alpha and beta chain produced by autocleavage. This heterodimer may then dimerize in turn, giving rise to a heterotetramer. In terms of processing, cleaved into an alpha and beta chain by autocatalysis; this activates the enzyme. The N-terminal residue of the beta subunit is responsible for the nucleophile hydrolase activity.

The protein resides in the cytoplasm. It catalyses the reaction L-asparagine + H2O = L-aspartate + NH4(+). It carries out the reaction Cleavage of a beta-linked Asp residue from the N-terminus of a polypeptide.. Functionally, has both L-asparaginase and beta-aspartyl peptidase activity. May be involved in the production of L-aspartate, which can act as an excitatory neurotransmitter in some brain regions. Is highly active with L-Asp beta-methyl ester. Besides, has catalytic activity toward beta-aspartyl dipeptides and their methyl esters, including beta-L-Asp-L-Phe, beta-L-Asp-L-Phe methyl ester (aspartame), beta-L-Asp-L-Ala, beta-L-Asp-L-Leu and beta-L-Asp-L-Lys. Does not have aspartylglucosaminidase activity and is inactive toward GlcNAc-L-Asn. Likewise, has no activity toward glutamine. This chain is Isoaspartyl peptidase/L-asparaginase (ASRGL1), found in Bos taurus (Bovine).